We begin with the raw amino-acid sequence, 294 residues long: Shikimate dehydrogenase (NADP(+)) (294 aa).

Shikimate-binding positions include Ser22–Ser24 and Ser69. Lys73 acts as the Proton acceptor in catalysis. Residues Asn94 and Asp111 each contribute to the shikimate site. Residues Gly135–Ala139 and Leu236 each bind NADP(+). A shikimate-binding site is contributed by Tyr238. Gly260 lines the NADP(+) pocket.

Belongs to the shikimate dehydrogenase family. As to quaternary structure, homodimer.

The catalysed reaction is shikimate + NADP(+) = 3-dehydroshikimate + NADPH + H(+). The protein operates within metabolic intermediate biosynthesis; chorismate biosynthesis; chorismate from D-erythrose 4-phosphate and phosphoenolpyruvate: step 4/7. Functionally, involved in the biosynthesis of the chorismate, which leads to the biosynthesis of aromatic amino acids. Catalyzes the reversible NADPH linked reduction of 3-dehydroshikimate (DHSA) to yield shikimate (SA). This is Shikimate dehydrogenase (NADP(+)) from Streptococcus equi subsp. zooepidemicus (strain MGCS10565).